The following is a 420-amino-acid chain: UDP-N-acetylglucosamine 1-carboxyvinyltransferase 2 (420 aa).

22-23 (KN) is a phosphoenolpyruvate binding site. Residue arginine 92 coordinates UDP-N-acetyl-alpha-D-glucosamine. Cysteine 116 functions as the Proton donor in the catalytic mechanism. A 2-(S-cysteinyl)pyruvic acid O-phosphothioketal modification is found at cysteine 116. UDP-N-acetyl-alpha-D-glucosamine contacts are provided by residues 121–125 (RPIDL), aspartate 307, and isoleucine 329.

Belongs to the EPSP synthase family. MurA subfamily.

The protein localises to the cytoplasm. It catalyses the reaction phosphoenolpyruvate + UDP-N-acetyl-alpha-D-glucosamine = UDP-N-acetyl-3-O-(1-carboxyvinyl)-alpha-D-glucosamine + phosphate. Its pathway is cell wall biogenesis; peptidoglycan biosynthesis. In terms of biological role, cell wall formation. Adds enolpyruvyl to UDP-N-acetylglucosamine. The polypeptide is UDP-N-acetylglucosamine 1-carboxyvinyltransferase 2 (Streptococcus thermophilus (strain CNRZ 1066)).